We begin with the raw amino-acid sequence, 361 residues long: 1D-myo-inositol 2-acetamido-2-deoxy-alpha-D-glucopyranoside deacetylase (361 aa).

A compositionally biased stretch (pro residues) spans 1–12; that stretch reads MTTTPQPPPQPD. Residues 1-27 form a disordered region; the sequence is MTTTPQPPPQPDETPEGAAGAATAGRD. The segment covering 16–25 has biased composition (low complexity); it reads EGAAGAATAG. Zn(2+) contacts are provided by histidine 66, aspartate 69, and histidine 207.

The protein belongs to the MshB deacetylase family. Zn(2+) serves as cofactor.

The enzyme catalyses 1D-myo-inositol 2-acetamido-2-deoxy-alpha-D-glucopyranoside + H2O = 1D-myo-inositol 2-amino-2-deoxy-alpha-D-glucopyranoside + acetate. Functionally, catalyzes the deacetylation of 1D-myo-inositol 2-acetamido-2-deoxy-alpha-D-glucopyranoside (GlcNAc-Ins) in the mycothiol biosynthesis pathway. The protein is 1D-myo-inositol 2-acetamido-2-deoxy-alpha-D-glucopyranoside deacetylase of Kineococcus radiotolerans (strain ATCC BAA-149 / DSM 14245 / SRS30216).